Here is a 607-residue protein sequence, read N- to C-terminus: Siderophore iron transporter mirC (607 aa).

Helical transmembrane passes span 67–89 (LVIA…QTIM), 129–148 (VFGR…LGYI), 186–208 (SLLN…VWIG), 223–245 (WGYG…SLLL), 279–301 (IFGL…LAAN), 311–328 (IVAM…LPFW), 349–368 (TALA…YFSV), 388–410 (GRVT…ILIK), 417–436 (VYVT…MLLY), 446–468 (VLGT…QLGV), 481–503 (TAMF…GAVW), and 557–574 (LLVL…LSLL). Residues 584 to 593 (SESSDHDDAS) are compositionally biased toward basic and acidic residues. A disordered region spans residues 584–607 (SESSDHDDASPRNGLGPGERAKRT).

This sequence belongs to the major facilitator superfamily.

The protein resides in the membrane. This is Siderophore iron transporter mirC (mirC) from Emericella nidulans (strain FGSC A4 / ATCC 38163 / CBS 112.46 / NRRL 194 / M139) (Aspergillus nidulans).